Consider the following 256-residue polypeptide: RNA polymerase sigma factor SigI1 (256 aa).

A Polymerase core binding motif is present at residues 67–80 (DEFSIALSAFNEAI). The H-T-H motif DNA-binding region spans 205-224 (RNELKKKAKVHGRTIGNNRK).

The protein belongs to the sigma-70 factor family. SigI subfamily. As to quaternary structure, interacts with RsgI1.

It is found in the cytoplasm. With respect to regulation, negatively regulated by the anti-sigma-I factor RsgI1. Binding of the polysaccharide substrate to RsgI1 may lead to the release and activation of SigI1. Its function is as follows. Sigma factors are initiation factors that promote the attachment of RNA polymerase to specific initiation sites and are then released. This sigma factor is involved in regulation of cellulosomal genes via an external polysaccharide-sensing mechanism. SigI1 promotes transcription from sigI1 and celS promoters. The polypeptide is RNA polymerase sigma factor SigI1 (Acetivibrio thermocellus (strain ATCC 27405 / DSM 1237 / JCM 9322 / NBRC 103400 / NCIMB 10682 / NRRL B-4536 / VPI 7372) (Clostridium thermocellum)).